The following is a 509-amino-acid chain: Maturase K (509 aa).

It belongs to the intron maturase 2 family. MatK subfamily.

Its subcellular location is the plastid. It localises to the chloroplast. Functionally, usually encoded in the trnK tRNA gene intron. Probably assists in splicing its own and other chloroplast group II introns. This Solanum bulbocastanum (Wild potato) protein is Maturase K.